Consider the following 303-residue polypeptide: 2-dehydropantoate 2-reductase (303 aa).

Residues 7 to 12 (GCGALG), N98, and A122 contribute to the NADP(+) site. Residue N98 coordinates substrate. K176 acts as the Proton donor in catalysis. Residues N180, N184, N194, and S244 each contribute to the substrate site. E256 provides a ligand contact to NADP(+).

This sequence belongs to the ketopantoate reductase family. Monomer.

Its subcellular location is the cytoplasm. The catalysed reaction is (R)-pantoate + NADP(+) = 2-dehydropantoate + NADPH + H(+). The protein operates within cofactor biosynthesis; (R)-pantothenate biosynthesis; (R)-pantoate from 3-methyl-2-oxobutanoate: step 2/2. Functionally, catalyzes the NADPH-dependent reduction of ketopantoate into pantoic acid. The chain is 2-dehydropantoate 2-reductase (panE) from Salmonella typhi.